Consider the following 63-residue polypeptide: Sarcotoxin-1A (63 aa).

A signal peptide spans 1–23; it reads MNFQNIFIFVALILAVFAGQSQA. Position 62 is an arginine amide (Arg-62).

It belongs to the cecropin family.

The protein resides in the secreted. Its function is as follows. Sarcotoxins, which are potent bactericidal proteins, are produced in response to injury. They are cytotoxic to both Gram-positive and Gram-negative bacteria. This Sarcophaga peregrina (Flesh fly) protein is Sarcotoxin-1A.